A 145-amino-acid polypeptide reads, in one-letter code: Large ribosomal subunit protein uL11 (145 aa).

It belongs to the universal ribosomal protein uL11 family. In terms of assembly, part of the ribosomal stalk of the 50S ribosomal subunit. Interacts with L10 and the large rRNA to form the base of the stalk. L10 forms an elongated spine to which L12 dimers bind in a sequential fashion forming a multimeric L10(L12)X complex. One or more lysine residues are methylated.

Its function is as follows. Forms part of the ribosomal stalk which helps the ribosome interact with GTP-bound translation factors. The sequence is that of Large ribosomal subunit protein uL11 from Porphyromonas gingivalis (strain ATCC 33277 / DSM 20709 / CIP 103683 / JCM 12257 / NCTC 11834 / 2561).